The sequence spans 2505 residues: Fatty acid synthase (2505 aa).

An N-acetylmethionine modification is found at M1. The 406-residue stretch at 1–406 (MEEVVIAGMS…GANVHVILQP (406 aa)) folds into the Ketosynthase family 3 (KS3) domain. K59 bears the N6-acetyllysine mark. At S63 the chain carries Phosphoserine. K70 is subject to N6-acetyllysine. The active-site For beta-ketoacyl synthase activity is the C161. A Phosphoserine modification is found at S207. The For beta-ketoacyl synthase activity role is filled by H293. Residue K298 is modified to N6-acetyllysine. H331 acts as the For beta-ketoacyl synthase activity in catalysis. Residues 429–817 (RTMEAVQGLL…IDINPNALFP (389 aa)) are acyl and malonyl transferases. K528 bears the N6-acetyllysine mark. Catalysis depends on S581, which acts as the For malonyltransferase activity. Residues 647 to 648 (DT) and F671 contribute to the an acyl-CoA site. The residue at position 673 (K673) is an N6-acetyllysine. S725 bears the Phosphoserine mark. R773 is a binding site for an acyl-CoA. An N6-acetyllysine modification is found at K790. The tract at residues 844 to 966 (IPVAEDFPNG…KVYQWEDPDS (123 aa)) is N-terminal hotdog fold. The PKS/mFAS DH domain occupies 844–1112 (IPVAEDFPNG…TSRRQQEQLV (269 aa)). H878 serves as the catalytic Proton acceptor; for dehydratase activity. The C-terminal hotdog fold stretch occupies residues 983-1112 (VSRLTQGEVY…TSRRQQEQLV (130 aa)). K993 carries the N6-acetyllysine modification. D1032 (proton donor; for dehydratase activity) is an active-site residue. An N6-acetyllysine modification is found at K1276. C1464 carries the S-nitrosocysteine modification. Phosphoserine occurs at positions 1578 and 1588. Residues 1629 to 1857 (DVPSSWTLEE…VQVREEEPEA (229 aa)) are enoyl reductase. NADP(+) is bound at residue 1665-1682 (VLIHSGSGGVGQAAISIA). K1698 is subject to N6-(pyridoxal phosphate)lysine; alternate. K1698 bears the N6-acetyllysine; alternate mark. Residues K1765, K1841, and K1989 each carry the N6-acetyllysine modification. 1765–1780 (KFDLSNNHPLGMAIFL) lines the NADP(+) pocket. The tract at residues 1858–2113 (MLPGAQPTLI…VLAEKKAVAH (256 aa)) is beta-ketoacyl reductase. C2085 bears the S-nitrosocysteine mark. The 81-residue stretch at 2113 to 2193 (HGDGEAQRDL…EMSSKAGSDT (81 aa)) folds into the Carrier domain. The residue at position 2151 (S2151) is an O-(pantetheine 4'-phosphoryl)serine; alternate. S2151 bears the Phosphoserine; alternate mark. 2 positions are modified to phosphoserine: S2191 and S2230. The interval 2202-2505 (NDTSLKQAQL…AEPRVSVREG (304 aa)) is thioesterase. S2302 serves as the catalytic For thioesterase activity. Residue K2385 is modified to N6-acetyllysine. Residue K2443 forms a Glycyl lysine isopeptide (Lys-Gly) (interchain with G-Cter in SUMO2) linkage. H2475 serves as the catalytic For thioesterase activity.

In terms of assembly, homodimer which is arranged in a head to tail fashion. Interacts with CEACAM1; this interaction is insulin and phosphorylation-dependent; reduces fatty-acid synthase activity. S-nitrosylation of Fatty acid synthase at cysteine residues Cys-1464 or Cys-2085 is important for the enzyme dimerization. In adipocytes, S-nitrosylation of Fatty acid synthase occurs under physiological conditions and gradually increases during adipogenesis.

The protein resides in the cytoplasm. It is found in the melanosome. The enzyme catalyses acetyl-CoA + n malonyl-CoA + 2n NADPH + 2n H(+) = a long-chain fatty acid + (n+1) CoA + n CO2 + 2n NADP(+).. The catalysed reaction is holo-[ACP] + acetyl-CoA = acetyl-[ACP] + CoA. It catalyses the reaction holo-[ACP] + malonyl-CoA = malonyl-[ACP] + CoA. It carries out the reaction a fatty acyl-[ACP] + malonyl-[ACP] + H(+) = a 3-oxoacyl-[ACP] + holo-[ACP] + CO2. The enzyme catalyses a (3R)-hydroxyacyl-[ACP] + NADP(+) = a 3-oxoacyl-[ACP] + NADPH + H(+). The catalysed reaction is a (3R)-hydroxyacyl-[ACP] = a (2E)-enoyl-[ACP] + H2O. It catalyses the reaction a 2,3-saturated acyl-[ACP] + NADP(+) = a (2E)-enoyl-[ACP] + NADPH + H(+). It carries out the reaction hexadecanoyl-[ACP] + H2O = hexadecanoate + holo-[ACP] + H(+). The enzyme catalyses acetyl-[ACP] + malonyl-[ACP] + H(+) = 3-oxobutanoyl-[ACP] + holo-[ACP] + CO2. The catalysed reaction is 3-oxobutanoyl-[ACP] + NADPH + H(+) = (3R)-hydroxybutanoyl-[ACP] + NADP(+). It catalyses the reaction (3R)-hydroxybutanoyl-[ACP] = (2E)-butenoyl-[ACP] + H2O. It carries out the reaction (2E)-butenoyl-[ACP] + NADPH + H(+) = butanoyl-[ACP] + NADP(+). The enzyme catalyses butanoyl-[ACP] + malonyl-[ACP] + H(+) = 3-oxohexanoyl-[ACP] + holo-[ACP] + CO2. The catalysed reaction is 3-oxohexanoyl-[ACP] + NADPH + H(+) = (3R)-hydroxyhexanoyl-[ACP] + NADP(+). It catalyses the reaction (3R)-hydroxyhexanoyl-[ACP] = (2E)-hexenoyl-[ACP] + H2O. It carries out the reaction (2E)-hexenoyl-[ACP] + NADPH + H(+) = hexanoyl-[ACP] + NADP(+). The enzyme catalyses hexanoyl-[ACP] + malonyl-[ACP] + H(+) = 3-oxooctanoyl-[ACP] + holo-[ACP] + CO2. The catalysed reaction is 3-oxooctanoyl-[ACP] + NADPH + H(+) = (3R)-hydroxyoctanoyl-[ACP] + NADP(+). It catalyses the reaction (3R)-hydroxyoctanoyl-[ACP] = (2E)-octenoyl-[ACP] + H2O. It carries out the reaction (2E)-octenoyl-[ACP] + NADPH + H(+) = octanoyl-[ACP] + NADP(+). The enzyme catalyses octanoyl-[ACP] + malonyl-[ACP] + H(+) = 3-oxodecanoyl-[ACP] + holo-[ACP] + CO2. The catalysed reaction is 3-oxodecanoyl-[ACP] + NADPH + H(+) = (3R)-hydroxydecanoyl-[ACP] + NADP(+). It catalyses the reaction (3R)-hydroxydecanoyl-[ACP] = (2E)-decenoyl-[ACP] + H2O. It carries out the reaction (2E)-decenoyl-[ACP] + NADPH + H(+) = decanoyl-[ACP] + NADP(+). The enzyme catalyses decanoyl-[ACP] + malonyl-[ACP] + H(+) = 3-oxododecanoyl-[ACP] + holo-[ACP] + CO2. The catalysed reaction is 3-oxododecanoyl-[ACP] + NADPH + H(+) = (3R)-hydroxydodecanoyl-[ACP] + NADP(+). It catalyses the reaction (3R)-hydroxydodecanoyl-[ACP] = (2E)-dodecenoyl-[ACP] + H2O. It carries out the reaction (2E)-dodecenoyl-[ACP] + NADPH + H(+) = dodecanoyl-[ACP] + NADP(+). The enzyme catalyses dodecanoyl-[ACP] + malonyl-[ACP] + H(+) = 3-oxotetradecanoyl-[ACP] + holo-[ACP] + CO2. The catalysed reaction is 3-oxotetradecanoyl-[ACP] + NADPH + H(+) = (3R)-hydroxytetradecanoyl-[ACP] + NADP(+). It catalyses the reaction (3R)-hydroxytetradecanoyl-[ACP] = (2E)-tetradecenoyl-[ACP] + H2O. It carries out the reaction (2E)-tetradecenoyl-[ACP] + NADPH + H(+) = tetradecanoyl-[ACP] + NADP(+). The enzyme catalyses tetradecanoyl-[ACP] + malonyl-[ACP] + H(+) = 3-oxohexadecanoyl-[ACP] + holo-[ACP] + CO2. The catalysed reaction is 3-oxohexadecanoyl-[ACP] + NADPH + H(+) = (3R)-hydroxyhexadecanoyl-[ACP] + NADP(+). It catalyses the reaction (3R)-hydroxyhexadecanoyl-[ACP] = (2E)-hexadecenoyl-[ACP] + H2O. It carries out the reaction (2E)-hexadecenoyl-[ACP] + NADPH + H(+) = hexadecanoyl-[ACP] + NADP(+). The enzyme catalyses hexadecanoyl-[ACP] + malonyl-[ACP] + H(+) = 3-oxooctadecanoyl-[ACP] + holo-[ACP] + CO2. The catalysed reaction is 3-oxooctadecanoyl-[ACP] + NADPH + H(+) = (3R)-hydroxyoctadecanoyl-[ACP] + NADP(+). It catalyses the reaction (3R)-hydroxyoctadecanoyl-[ACP] = (2E)-octadecenoyl-[ACP] + H2O. It carries out the reaction (2E)-octadecenoyl-[ACP] + NADPH + H(+) = octadecanoyl-[ACP] + NADP(+). The enzyme catalyses tetradecanoyl-[ACP] + H2O = tetradecanoate + holo-[ACP] + H(+). The catalysed reaction is octadecanoyl-[ACP] + H2O = octadecanoate + holo-[ACP] + H(+). The protein operates within lipid metabolism; fatty acid biosynthesis. Its activity is regulated as follows. Cerulenin, a potent non-competitive pharmacological inhibitor of FAS, binds covalently to the active site of the condensing enzyme region, inactivating a key enzyme step in fatty acid synthesis. Another inhibitor, though less efficient, is C75, a member of the alpha-methylene-gamma-butyrolactone chemical class, also proposed as an antitumour and anti-obesity agent. Its function is as follows. Fatty acid synthetase is a multifunctional enzyme that catalyzes the de novo biosynthesis of long-chain saturated fatty acids starting from acetyl-CoA and malonyl-CoA in the presence of NADPH. This multifunctional protein contains 7 catalytic activities and a site for the binding of the prosthetic group 4'-phosphopantetheine of the acyl carrier protein ([ACP]) domain. This chain is Fatty acid synthase (Fasn), found in Rattus norvegicus (Rat).